The sequence spans 503 residues: Plant-specific TFIIB-related protein 1 (503 aa).

The segment at 1–33 (MKCPYCSSAQGRCTTTSSGRSITECSSCGRVME) adopts a TFIIB-type zinc-finger fold. Disordered stretches follow at residues 328–366 (PEKAFPTTTISTTRSTTPRAVDPPEPSFVEKDKPSAKPI), 411–431 (NAMDYEKQQLDKQQQQQLGDK), 436–455 (IYLRDHNPFPSNPSPSTGIS), and 468–503 (GSSSNLPVIHPPKLPPGYAEIRGSGSRNADNPHGDF). Positions 333 to 346 (PTTTISTTRSTTPR) are enriched in low complexity. Residues 355–366 (FVEKDKPSAKPI) are compositionally biased toward basic and acidic residues.

Post-translationally, ubiquinated. Subsequent degradation by the proteasome pathway. Widely expressed.

It is found in the plastid. Its subcellular location is the chloroplast outer membrane. The protein resides in the nucleus. Functionally, plant-specific TFIIB-related protein that may be involved in an intracellular signaling pathway between plastids and the nucleus. May act as general transcription factor (GTF) of RNA polymerase I-dependent transcription and rRNA synthesis. Forms a ternary complex with TBP2 and the rDNA promoter region. This Arabidopsis thaliana (Mouse-ear cress) protein is Plant-specific TFIIB-related protein 1.